The chain runs to 521 residues: GMP synthase [glutamine-hydrolyzing] (521 aa).

A Glutamine amidotransferase type-1 domain is found at 5–197; it reads KILILDFGSQ…VLDICGAQPS (193 aa). The Nucleophile role is filled by C81. Active-site residues include H171 and E173. One can recognise a GMPS ATP-PPase domain in the interval 198–390; it reads WTMPNYIEEA…LGLPREMVYR (193 aa). ATP is bound at residue 225-231; the sequence is SGGVDSS.

As to quaternary structure, homodimer.

The enzyme catalyses XMP + L-glutamine + ATP + H2O = GMP + L-glutamate + AMP + diphosphate + 2 H(+). It participates in purine metabolism; GMP biosynthesis; GMP from XMP (L-Gln route): step 1/1. Functionally, catalyzes the synthesis of GMP from XMP. The sequence is that of GMP synthase [glutamine-hydrolyzing] from Neisseria meningitidis serogroup C / serotype 2a (strain ATCC 700532 / DSM 15464 / FAM18).